Reading from the N-terminus, the 513-residue chain is GTPase Obg (513 aa).

Residues 3–160 enclose the Obg domain; it reads THFVDRVVVH…LDLHLEVKTL (158 aa). Residues 161–337 form the OBG-type G domain; it reads ADVALVGFPS…LSFAMAELVS (177 aa). GTP contacts are provided by residues 167–174, 192–196, 213–216, 289–292, and 318–320; these read GFPSAGKS, FTTLV, DVPG, NKAD, and SAV. Mg(2+) is bound by residues serine 174 and threonine 194. Positions 355–444 constitute an OCT domain; it reads PRAVDDQGFK…ANAVVFDWEP (90 aa). Residues 457–513 are disordered; it reads GSDLRLEDHSRPTRDEKRLQERERRAAKVTARDELEAERRAGHWTAADEADEELSQR. Basic and acidic residues predominate over residues 458–497; the sequence is SDLRLEDHSRPTRDEKRLQERERRAAKVTARDELEAERRA. Residues 504-513 are compositionally biased toward acidic residues; it reads DEADEELSQR.

Belongs to the TRAFAC class OBG-HflX-like GTPase superfamily. OBG GTPase family. As to quaternary structure, monomer. Mg(2+) is required as a cofactor.

It localises to the cytoplasm. In terms of biological role, an essential GTPase which binds GTP, GDP and possibly (p)ppGpp with moderate affinity, with high nucleotide exchange rates and a fairly low GTP hydrolysis rate. Plays a role in control of the cell cycle, stress response, ribosome biogenesis and in those bacteria that undergo differentiation, in morphogenesis control. The chain is GTPase Obg from Kineococcus radiotolerans (strain ATCC BAA-149 / DSM 14245 / SRS30216).